The sequence spans 328 residues: Lactamase-like protein nscB (328 aa).

Zn(2+) contacts are provided by H97, H99, D101, and H102. D101 (proton donor/acceptor) is an active-site residue.

The protein belongs to the metallo-beta-lactamase superfamily. Zn(2+) is required as a cofactor.

It functions in the pathway secondary metabolite biosynthesis. Its function is as follows. Lactamase-like protein; part of the gene cluster that mediates the biosynthesis of neosartoricin, a prenylated anthracenone that exhibits T-cell antiproliferative activity, suggestive of a physiological role as an immunosuppressive agent. The non-reducing polyketide synthase nscA probably synthesizes and cyclizes the decaketide backbone. The hydrolase nscB then mediates the product release through hydrolysis followed by spontaneous decarboxylation. The prenyltransferase nscD catalyzes the addition of the dimethylallyl group to the aromatic C5. The FAD-dependent monooxygenase nscC is then responsible for the stereospecific hydroxylation at C2. There is no gene encoding O-acetyltransferase in the nsc gene cluster; thus, the last step of 2-O-acetylation leading to neosartoricin may be catalyzed by an unidentified O-acetyltransferase. The polypeptide is Lactamase-like protein nscB (Neosartorya fischeri (strain ATCC 1020 / DSM 3700 / CBS 544.65 / FGSC A1164 / JCM 1740 / NRRL 181 / WB 181) (Aspergillus fischerianus)).